Consider the following 182-residue polypeptide: Hexose transport activator protein (182 aa).

A disordered region spans residues 46–65 (GIWGPMEKKPGGVGKKKGSE).

Multicopy expression suppresses glucose-uptake defects in various yeast mutants. In Saccharomyces cerevisiae (strain ATCC 204508 / S288c) (Baker's yeast), this protein is Hexose transport activator protein (AHT1).